The following is a 406-amino-acid chain: Tyrosine--tRNA ligase (406 aa).

Tyrosine 35 lines the L-tyrosine pocket. The 'HIGH' region motif lies at 40-49 (ATSTSLHIGH). L-tyrosine-binding residues include tyrosine 166 and glutamine 170. The short motif at 226 to 230 (KMGKS) is the 'KMSKS' region element. Lysine 229 is a binding site for ATP. One can recognise an S4 RNA-binding domain in the interval 341–405 (ILLIDLMVLS…IGKKRILRVI (65 aa)).

The protein belongs to the class-I aminoacyl-tRNA synthetase family. TyrS type 1 subfamily. As to quaternary structure, homodimer.

The protein localises to the cytoplasm. The enzyme catalyses tRNA(Tyr) + L-tyrosine + ATP = L-tyrosyl-tRNA(Tyr) + AMP + diphosphate + H(+). Catalyzes the attachment of tyrosine to tRNA(Tyr) in a two-step reaction: tyrosine is first activated by ATP to form Tyr-AMP and then transferred to the acceptor end of tRNA(Tyr). This is Tyrosine--tRNA ligase from Borrelia turicatae (strain 91E135).